Reading from the N-terminus, the 384-residue chain is Bacterial ceramide synthase (384 aa).

It localises to the cytoplasm. The catalysed reaction is 3-oxosphinganine + a fatty acyl-CoA = N-acyl-3-oxosphinganine + CoA + H(+). It catalyses the reaction 3-oxosphinganine + tetradecanoyl-CoA = N-tetradecanoyl-3-oxosphinganine + CoA + H(+). The enzyme catalyses 3-oxosphinganine + hexadecanoyl-CoA = N-hexadecanoyl-3-oxosphinganine + CoA + H(+). It carries out the reaction 3-oxosphinganine + (9Z)-hexadecenoyl-CoA = N-(9Z-hexadecenoyl)-3-oxosphinganine + CoA + H(+). The catalysed reaction is 3-oxosphinganine + octanoyl-CoA = N-octanoyl-3-oxosphinganine + CoA + H(+). It catalyses the reaction 3-oxosphinganine + decanoyl-CoA = N-decanoyl-3-oxosphinganine + CoA + H(+). The enzyme catalyses 3-oxosphinganine + dodecanoyl-CoA = N-dodecanoyl-3-oxosphinganine + CoA + H(+). It carries out the reaction 3-oxosphinganine + octadecanoyl-CoA = N-octadecanoyl-3-oxosphinganine + CoA + H(+). The catalysed reaction is 3-oxosphinganine + eicosanoyl-CoA = N-eicosanoyl-3-oxosphinganine + CoA + H(+). It catalyses the reaction 3-oxosphinganine + docosanoyl-CoA = N-docosanoyl-3-ketodihydrosphingosine + CoA + H(+). The enzyme catalyses 3-oxosphinganine + tetracosanoyl-CoA = N-tetracosanoyl-3-oxosphinganine + CoA + H(+). It functions in the pathway lipid metabolism; sphingolipid metabolism. Involved in de novo bacterial ceramide synthesis. Catalyzes the condensation of 3-oxosphinganine with an acyl-CoA to generate oxidized ceramides. Can use acyl-CoA substrates ranging from C8 to C24, with highest in vitro activity with C14 and very little activity with acyl-CoA thioesters of 18 carbons or longer. May have a preference for monounsaturated acyl-CoA substrates, as it has a threefold greater preference for C16:1-CoA over C16:0-CoA as a substrate in vitro. The sequence is that of Bacterial ceramide synthase from Caulobacter vibrioides (strain NA1000 / CB15N) (Caulobacter crescentus).